The sequence spans 91 residues: Non-structural protein 3a (91 aa).

Residues methionine 1 to serine 19 form the signal peptide.

The polypeptide is Non-structural protein 3a (Tylonycteris pachypus (Lesser bamboo bat)).